A 995-amino-acid polypeptide reads, in one-letter code: ATP-dependent RNA helicase DBP10 (995 aa).

Positions 1-120 (MAGVQKRKRD…TQTGDDEDDV (120 aa)) are disordered. Composition is skewed to acidic residues over residues 12–25 (EDQD…DDIA) and 37–50 (SESD…EVEA). Positions 71 to 81 (VNNKKKAENKD) are enriched in basic and acidic residues. Ser101 carries the post-translational modification Phosphoserine. Residues 137–165 (GSFPSFGLSKIVLNNIKRKGFRQPTPIQR) carry the Q motif motif. Positions 168-340 (IPLILQSRDI…KAGLVNPVLV (173 aa)) constitute a Helicase ATP-binding domain. Position 181–188 (181–188 (ARTGSGKT)) interacts with ATP. A DEAD box motif is present at residues 288-291 (DEAD). Disordered regions lie at residues 389–427 (LQNS…PAAN) and 889–973 (GSRE…EQIR). A phosphoserine mark is found at Ser398 and Ser400. Basic residues-rich tracts occupy residues 407–422 (QKKR…RKQK) and 914–924 (VRGKFKHKQMK). In terms of domain architecture, Helicase C-terminal spans 418–568 (FRKQKMPAAN…PMYDSLVDVM (151 aa)). Over residues 964–973 (SELKSTEQIR) the composition is skewed to basic and acidic residues.

Belongs to the DEAD box helicase family. DDX54/DBP10 subfamily. As to quaternary structure, interacts with RRP1 and associates with pre-ribosomal particles.

It is found in the nucleus. Its subcellular location is the nucleolus. The enzyme catalyses ATP + H2O = ADP + phosphate + H(+). Functionally, ATP-binding RNA helicase involved in the biogenesis of 60S ribosomal subunits and is required for the normal formation of 25S and 5.8S rRNAs. In Saccharomyces cerevisiae (strain ATCC 204508 / S288c) (Baker's yeast), this protein is ATP-dependent RNA helicase DBP10 (DBP10).